Here is a 364-residue protein sequence, read N- to C-terminus: GDP-perosamine synthase (364 aa).

Lys183 is subject to N6-(pyridoxal phosphate)lysine.

The protein belongs to the DegT/DnrJ/EryC1 family. Homodecamer. Requires pyridoxal 5'-phosphate as cofactor.

The catalysed reaction is GDP-alpha-D-perosamine + 2-oxoglutarate = GDP-4-dehydro-alpha-D-rhamnose + L-glutamate. The protein operates within bacterial outer membrane biogenesis; LPS O-antigen biosynthesis. With respect to regulation, divalent ions have no significant effect on activity. Catalyzes the synthesis of GDP-perosamine from GDP-4-keto-6-deoxy-D-mannose and L-glutamate. Can use only L-glutamate as amino donor. The protein is GDP-perosamine synthase of Escherichia coli O157:H7.